Consider the following 434-residue polypeptide: Nicotinate phosphoribosyltransferase (434 aa).

A Phosphohistidine; by autocatalysis modification is found at His242.

The protein belongs to the NAPRTase family. Post-translationally, transiently phosphorylated on a His residue during the reaction cycle. Phosphorylation strongly increases the affinity for substrates and increases the rate of nicotinate D-ribonucleotide production. Dephosphorylation regenerates the low-affinity form of the enzyme, leading to product release.

It carries out the reaction nicotinate + 5-phospho-alpha-D-ribose 1-diphosphate + ATP + H2O = nicotinate beta-D-ribonucleotide + ADP + phosphate + diphosphate. It functions in the pathway cofactor biosynthesis; NAD(+) biosynthesis; nicotinate D-ribonucleotide from nicotinate: step 1/1. In terms of biological role, catalyzes the synthesis of beta-nicotinate D-ribonucleotide from nicotinate and 5-phospho-D-ribose 1-phosphate at the expense of ATP. The sequence is that of Nicotinate phosphoribosyltransferase from Sinorhizobium medicae (strain WSM419) (Ensifer medicae).